The following is a 518-amino-acid chain: Glutamate--cysteine ligase (518 aa).

Belongs to the glutamate--cysteine ligase type 1 family. Type 1 subfamily.

It carries out the reaction L-cysteine + L-glutamate + ATP = gamma-L-glutamyl-L-cysteine + ADP + phosphate + H(+). It functions in the pathway sulfur metabolism; glutathione biosynthesis; glutathione from L-cysteine and L-glutamate: step 1/2. In Buchnera aphidicola subsp. Acyrthosiphon pisum (strain APS) (Acyrthosiphon pisum symbiotic bacterium), this protein is Glutamate--cysteine ligase (gshA).